The primary structure comprises 195 residues: 3-isopropylmalate dehydratase small subunit (195 aa).

It belongs to the LeuD family. LeuD type 1 subfamily. In terms of assembly, heterodimer of LeuC and LeuD.

The enzyme catalyses (2R,3S)-3-isopropylmalate = (2S)-2-isopropylmalate. It participates in amino-acid biosynthesis; L-leucine biosynthesis; L-leucine from 3-methyl-2-oxobutanoate: step 2/4. Catalyzes the isomerization between 2-isopropylmalate and 3-isopropylmalate, via the formation of 2-isopropylmaleate. The protein is 3-isopropylmalate dehydratase small subunit of Koribacter versatilis (strain Ellin345).